Reading from the N-terminus, the 211-residue chain is Dephospho-CoA kinase (211 aa).

Residues 3-206 (VLGLTGGIGS…PGMKGPDPHA (204 aa)) form the DPCK domain. 11–16 (GSGKSI) contacts ATP.

It belongs to the CoaE family.

It localises to the cytoplasm. It catalyses the reaction 3'-dephospho-CoA + ATP = ADP + CoA + H(+). Its pathway is cofactor biosynthesis; coenzyme A biosynthesis; CoA from (R)-pantothenate: step 5/5. Catalyzes the phosphorylation of the 3'-hydroxyl group of dephosphocoenzyme A to form coenzyme A. The polypeptide is Dephospho-CoA kinase (Syntrophotalea carbinolica (strain DSM 2380 / NBRC 103641 / GraBd1) (Pelobacter carbinolicus)).